Reading from the N-terminus, the 409-residue chain is Runt-related transcription factor 3 (409 aa).

3 disordered regions span residues 1–51 (MRIP…RTRP), 177–248 (GPRE…QFDR), and 346–409 (AGGG…WRPY). Polar residues predominate over residues 7 to 17 (PSTSRRFTPPS). Residues 55–183 (SMVDVLADHA…TVDGPREPRR (129 aa)) form the Runt domain. Over residues 187-204 (KIEDQTKAFPDRFGDLRM) the composition is skewed to basic and acidic residues. K193 participates in a covalent cross-link: Glycyl lysine isopeptide (Lys-Gly) (interchain with G-Cter in SUMO2). The segment covering 207-238 (TPSTPSPRGSLSTTSHFSSQAQTPIQGSSDLN) has biased composition (polar residues). Residue S241 is modified to Phosphoserine. Polar residues-rich tracts occupy residues 355-376 (RMLT…NPSL) and 387-396 (SHSNSPTALS). A compositionally biased stretch (basic and acidic residues) spans 400–409 (RMDEAVWRPY).

In terms of assembly, heterodimer with CBFB. RUNX3 binds DNA as a monomer and through the Runt domain. DNA-binding is increased by heterodimerization. Interacts with TLE1 and SUV39H1. The tyrosine phosphorylated form (via runt domain) interacts with SRC (via protein kinase domain). Interacts with FYN and LCK. Interacts with FOXP3. Interacts with ZFHX3. Interacts with TBX21. Phosphorylated on tyrosine residues by SRC. Phosphorylated by LCK and FYN.

Its subcellular location is the nucleus. The protein localises to the cytoplasm. Functionally, forms the heterodimeric complex core-binding factor (CBF) with CBFB. RUNX members modulate the transcription of their target genes through recognizing the core consensus binding sequence 5'-TGTGGT-3', or very rarely, 5'-TGCGGT-3', within their regulatory regions via their runt domain, while CBFB is a non-DNA-binding regulatory subunit that allosterically enhances the sequence-specific DNA-binding capacity of RUNX. The heterodimers bind to the core site of a number of enhancers and promoters, including murine leukemia virus, polyomavirus enhancer, T-cell receptor enhancers, LCK, IL3 and GM-CSF promoters. May be involved in the control of cellular proliferation and/or differentiation. In association with ZFHX3, up-regulates CDKN1A promoter activity following TGF-beta stimulation. CBF complexes repress ZBTB7B transcription factor during cytotoxic (CD8+) T cell development. They bind to RUNX-binding sequence within the ZBTB7B locus acting as transcriptional silencer and allowing for cytotoxic T cell differentiation. CBF complexes binding to the transcriptional silencer is essential for recruitment of nuclear protein complexes that catalyze epigenetic modifications to establish epigenetic ZBTB7B silencing. Necessary for the development and survival of sensory neurons expressing parvalbumin. In Mus musculus (Mouse), this protein is Runt-related transcription factor 3 (Runx3).